Here is a 479-residue protein sequence, read N- to C-terminus: Aspartyl/glutamyl-tRNA(Asn/Gln) amidotransferase subunit B (479 aa).

It belongs to the GatB/GatE family. GatB subfamily. Heterotrimer of A, B and C subunits.

It catalyses the reaction L-glutamyl-tRNA(Gln) + L-glutamine + ATP + H2O = L-glutaminyl-tRNA(Gln) + L-glutamate + ADP + phosphate + H(+). The enzyme catalyses L-aspartyl-tRNA(Asn) + L-glutamine + ATP + H2O = L-asparaginyl-tRNA(Asn) + L-glutamate + ADP + phosphate + 2 H(+). Allows the formation of correctly charged Asn-tRNA(Asn) or Gln-tRNA(Gln) through the transamidation of misacylated Asp-tRNA(Asn) or Glu-tRNA(Gln) in organisms which lack either or both of asparaginyl-tRNA or glutaminyl-tRNA synthetases. The reaction takes place in the presence of glutamine and ATP through an activated phospho-Asp-tRNA(Asn) or phospho-Glu-tRNA(Gln). The chain is Aspartyl/glutamyl-tRNA(Asn/Gln) amidotransferase subunit B from Streptococcus equi subsp. zooepidemicus (strain MGCS10565).